The sequence spans 352 residues: Photosystem II D2 protein (352 aa).

Over 1–31 the chain is Cytoplasmic; sequence MTIAVGRAPVERGWFDVLDDWLKRDRFVFIG. Residues 32–53 traverse the membrane as a helical segment; the sequence is WSGLLLFPCAFMALGGWLTGTT. The Lumenal, thylakoid portion of the chain corresponds to 54–108; the sequence is FVTSWYTHGLASSYLEGANFLTVAVSSPADAFGHSLLFLWGPEAQGNLTRWFQIG. The helical transmembrane segment at 109–131 threads the bilayer; that stretch reads GLWPFVALHGAFGLIGFMLRQFE. Histidine 117 lines the chlorophyll a pocket. Glutamine 129 is a binding site for pheophytin a. Residues 132–140 are Cytoplasmic-facing; it reads ISRLVGIRP. A helical transmembrane segment spans residues 141–162; sequence YNAIAFSGPIAVFVSVFLMYPL. Position 142 (asparagine 142) interacts with pheophytin a. Residues 163–190 are Lumenal, thylakoid-facing; that stretch reads GQSSWFFAPSFGVAGIFRFILFLQGFHN. A helical membrane pass occupies residues 191–217; it reads WTLNPFHMMGVAGILGGALLCAIHGAT. Histidine 197 serves as a coordination point for chlorophyll a. A plastoquinone contacts are provided by histidine 214 and phenylalanine 261. Position 214 (histidine 214) interacts with Fe cation. At 218–265 the chain is on the cytoplasmic side; it reads VENTLFEDGEDSNTFRAFEPTQAEETYSMVTANRFWSQIFGIAFSNKR. Residues 266-288 traverse the membrane as a helical segment; sequence WLHFFMLFVPVTGLWMSSVGIVG. Histidine 268 contacts Fe cation. The Lumenal, thylakoid segment spans residues 289-352; that stretch reads LALNLRAYDF…EEVLPRGNAL (64 aa).

It belongs to the reaction center PufL/M/PsbA/D family. As to quaternary structure, PSII is composed of 1 copy each of membrane proteins PsbA, PsbB, PsbC, PsbD, PsbE, PsbF, PsbH, PsbI, PsbJ, PsbK, PsbL, PsbM, PsbT, PsbX, PsbY, PsbZ, Psb30/Ycf12, peripheral proteins PsbO, CyanoQ (PsbQ), PsbU, PsbV and a large number of cofactors. It forms dimeric complexes. The D1/D2 heterodimer binds P680, chlorophylls that are the primary electron donor of PSII, and subsequent electron acceptors. It shares a non-heme iron and each subunit binds pheophytin, quinone, additional chlorophylls, carotenoids and lipids. There is also a Cl(-1) ion associated with D1 and D2, which is required for oxygen evolution. The PSII complex binds additional chlorophylls, carotenoids and specific lipids. is required as a cofactor.

It is found in the cellular thylakoid membrane. The enzyme catalyses 2 a plastoquinone + 4 hnu + 2 H2O = 2 a plastoquinol + O2. Its function is as follows. Photosystem II (PSII) is a light-driven water:plastoquinone oxidoreductase that uses light energy to abstract electrons from H(2)O, generating O(2) and a proton gradient subsequently used for ATP formation. It consists of a core antenna complex that captures photons, and an electron transfer chain that converts photonic excitation into a charge separation. The D1/D2 (PsbA/PsbD) reaction center heterodimer binds P680, the primary electron donor of PSII as well as several subsequent electron acceptors. D2 is needed for assembly of a stable PSII complex. This Synechocystis sp. (strain ATCC 27184 / PCC 6803 / Kazusa) protein is Photosystem II D2 protein.